Reading from the N-terminus, the 204-residue chain is Peptidyl-prolyl cis-trans isomerase CYP20-1 (204 aa).

Positions 1–23 (MASSVTLLLWSLLLLGTLSAIQA) are cleaved as a signal peptide. The PPIase cyclophilin-type domain occupies 38–201 (YFDVEIDGKA…SKVVIVDSGE (164 aa)).

This sequence belongs to the cyclophilin-type PPIase family. As to quaternary structure, interacts with the PP2A A subunit PP2AA1/RCN1. Ubiquitous, mostly in aerial organs. Higher levels in leaf and buds, and lower levels in seedlings.

It is found in the endoplasmic reticulum. Its subcellular location is the secreted. It catalyses the reaction [protein]-peptidylproline (omega=180) = [protein]-peptidylproline (omega=0). With respect to regulation, binds cyclosporin A (CsA). CsA mediates some of its effects via an inhibitory action on PPIase. Its function is as follows. PPIases accelerate the folding of proteins. It catalyzes the cis-trans isomerization of proline imidic peptide bonds in oligopeptides. Seems to be involved in root development. The protein is Peptidyl-prolyl cis-trans isomerase CYP20-1 (CYP20-1) of Arabidopsis thaliana (Mouse-ear cress).